Consider the following 217-residue polypeptide: MKSTVEQAMLFEEKSIFENQAIEQGYSQVAGVDEAGRGPLAGPVVAGACILPRGKVFLGIDDSKKLTPKQRRYLYELLLEDPEVDCGVGVISVERIDEINILEATKEAMVQAIASLRSTPDFLLVDGLFLPHKIPSLKIIKGDARSVSIAAASIIAKEYRDELMRKLHVEYPEYGFDKHKGYGTAAHLQALKHFGPCVYHRKSFSPVKESIQEGVCQ.

The region spanning 27-216 (SQVAGVDEAG…VKESIQEGVC (190 aa)) is the RNase H type-2 domain. 3 residues coordinate a divalent metal cation: Asp-33, Glu-34, and Asp-126.

The protein belongs to the RNase HII family. Mn(2+) is required as a cofactor. It depends on Mg(2+) as a cofactor.

Its subcellular location is the cytoplasm. The enzyme catalyses Endonucleolytic cleavage to 5'-phosphomonoester.. In terms of biological role, endonuclease that specifically degrades the RNA of RNA-DNA hybrids. This Chlamydia trachomatis serovar L2 (strain ATCC VR-902B / DSM 19102 / 434/Bu) protein is Ribonuclease HII.